A 113-amino-acid chain; its full sequence is Nucleoid-associated protein Syncc9902_0023 (113 aa).

This sequence belongs to the YbaB/EbfC family. As to quaternary structure, homodimer.

It localises to the cytoplasm. Its subcellular location is the nucleoid. Its function is as follows. Binds to DNA and alters its conformation. May be involved in regulation of gene expression, nucleoid organization and DNA protection. This chain is Nucleoid-associated protein Syncc9902_0023, found in Synechococcus sp. (strain CC9902).